The primary structure comprises 130 residues: Small ribosomal subunit protein uS8 (130 aa).

The protein belongs to the universal ribosomal protein uS8 family. As to quaternary structure, part of the 30S ribosomal subunit. Contacts proteins S5 and S12.

Functionally, one of the primary rRNA binding proteins, it binds directly to 16S rRNA central domain where it helps coordinate assembly of the platform of the 30S subunit. The chain is Small ribosomal subunit protein uS8 from Marinobacter nauticus (strain ATCC 700491 / DSM 11845 / VT8) (Marinobacter aquaeolei).